A 404-amino-acid chain; its full sequence is UPF0261 protein CTC_01794 (404 aa).

It belongs to the UPF0261 family.

This chain is UPF0261 protein CTC_01794, found in Clostridium tetani (strain Massachusetts / E88).